The following is a 675-amino-acid chain: Transketolase, chloroplastic (675 aa).

Thiamine diphosphate contacts are provided by residues histidine 78 and 127-129; that span reads GPL. Aspartate 168 serves as a coordination point for Mg(2+). Thiamine diphosphate is bound by residues glycine 169, glutamate 173, and asparagine 198. 2 residues coordinate Mg(2+): asparagine 198 and isoleucine 200. A thiamine diphosphate-binding site is contributed by histidine 275. Substrate-binding residues include histidine 275, arginine 369, and serine 396. Thiamine diphosphate-binding positions include glutamate 423 and 450–453; that span reads FTDY. Glutamate 423 acts as the Proton donor in catalysis. The substrate site is built by histidine 474, aspartate 482, and arginine 533.

Homodimer. Mg(2+) serves as cofactor. Ca(2+) is required as a cofactor. The cofactor is Mn(2+). Requires Co(2+) as cofactor. It depends on thiamine diphosphate as a cofactor.

Its subcellular location is the plastid. The protein localises to the chloroplast thylakoid membrane. It carries out the reaction D-sedoheptulose 7-phosphate + D-glyceraldehyde 3-phosphate = aldehydo-D-ribose 5-phosphate + D-xylulose 5-phosphate. The protein operates within carbohydrate biosynthesis; Calvin cycle. Catalyzes the reversible transfer of a two-carbon ketol group from fructose-6-phosphate or sedoheptulose-7-phosphate to glyceraldehyde-3-phosphate to yield xylulose-5-phosphate and erythrose-4-phosphate or ribose-5-phosphate, respectively. This chain is Transketolase, chloroplastic, found in Zea mays (Maize).